The following is a 299-amino-acid chain: Biotin transporter (299 aa).

10 consecutive transmembrane segments (helical) span residues 2–22 (ALLI…GEYL), 26–46 (VDSY…FLPF), 56–76 (TVGL…MLSF), 81–101 (YLTV…ITLI), 110–130 (LRWG…IIRY), 137–157 (FWTG…GMVG), 172–192 (AFAW…FLLG), 202–222 (LQWG…YFMW), 233–253 (TLGI…LAIW), and 256–276 (QPHW…LWVH). EamA domains lie at 3-128 (LLII…AGII) and 139-274 (TGLL…ASLW).

The protein belongs to the drug/metabolite transporter (DMT) superfamily. 10 TMS drug/metabolite exporter (DME) (TC 2.A.7.3) family.

It localises to the cell inner membrane. The catalysed reaction is biotin(in) = biotin(out). In terms of biological role, uptake of biotin. The polypeptide is Biotin transporter (Escherichia coli O157:H7).